A 116-amino-acid polypeptide reads, in one-letter code: MNLILAGLLIMSILSMILAMIAFWLPNMTPDTEKLSPYECGFDPLGSARLPFSLRFFLVAILFLLFDLEIALLLPLPWADQLTNPTLALTWTTSIIALLTLGLIHEWTQGGLEWAE.

3 helical membrane passes run 3–23 (LILA…MIAF), 56–76 (FFLV…LLPL), and 85–105 (PTLA…GLIH).

Belongs to the complex I subunit 3 family.

Its subcellular location is the mitochondrion membrane. The catalysed reaction is a ubiquinone + NADH + 5 H(+)(in) = a ubiquinol + NAD(+) + 4 H(+)(out). Its function is as follows. Core subunit of the mitochondrial membrane respiratory chain NADH dehydrogenase (Complex I) that is believed to belong to the minimal assembly required for catalysis. Complex I functions in the transfer of electrons from NADH to the respiratory chain. The immediate electron acceptor for the enzyme is believed to be ubiquinone. The protein is NADH-ubiquinone oxidoreductase chain 3 (MT-ND3) of Latimeria chalumnae (Coelacanth).